The primary structure comprises 320 residues: NAD kinase (320 aa).

Asp96 acts as the Proton acceptor in catalysis. Residues 96–97 (DG), Arg101, 170–171 (NE), Asp200, and 211–216 (TAYAFS) each bind NAD(+).

It belongs to the NAD kinase family. It depends on a divalent metal cation as a cofactor.

It is found in the cytoplasm. The enzyme catalyses NAD(+) + ATP = ADP + NADP(+) + H(+). Functionally, involved in the regulation of the intracellular balance of NAD and NADP, and is a key enzyme in the biosynthesis of NADP. Catalyzes specifically the phosphorylation on 2'-hydroxyl of the adenosine moiety of NAD to yield NADP. This is NAD kinase from Rhodococcus opacus (strain B4).